The primary structure comprises 768 residues: Post-transcriptional regulator MKT1 (768 aa).

This sequence belongs to the XPG/RAD2 endonuclease family. Interacts with PBP1.

It localises to the cytoplasm. The protein localises to the cytosol. In terms of biological role, involved in 3'-UTR mediated RNA regulation. Complexes with PBP1 to promote mRNA interactions with poly(A)-binding protein. The polypeptide is Post-transcriptional regulator MKT1 (Cryptococcus neoformans var. grubii serotype A (strain H99 / ATCC 208821 / CBS 10515 / FGSC 9487) (Filobasidiella neoformans var. grubii)).